The sequence spans 168 residues: MDWILPIAGIIAAIAFLVLCIGIVVVLISVKKNLDHVAKTLDGVEGQVQGITRETTDLLHKANRLTEDIQGKVERLNSVVDGVKGIGDSVQNLNGSVDRVTNSITHNISQNEDKISQVVQWSNVAMEIADKWQNRHYRRGSANYRNTSVGNDANHSNENYTTNVEKNF.

A helical transmembrane segment spans residues 7–27 (IAGIIAAIAFLVLCIGIVVVL). Positions 144–168 (YRNTSVGNDANHSNENYTTNVEKNF) are disordered.

It belongs to the UPF0478 family.

Its subcellular location is the cell membrane. The protein is UPF0478 protein SH1183 of Staphylococcus haemolyticus (strain JCSC1435).